The sequence spans 951 residues: Leucine-rich repeat-containing G-protein coupled receptor 4 (951 aa).

An N-terminal signal peptide occupies residues 1–24 (MPGPLRLLCFFALGLLGSAGPSGA). The 33-residue stretch at 25-57 (APPLCAAPCSCDGDRRVDCSGKGLTAVPEGLSA) folds into the LRRNT domain. Over 25–544 (APPLCAAPCS…LLGSWMIRLT (520 aa)) the chain is Extracellular. 2 disulfide bridges follow: Cys-29/Cys-35 and Cys-33/Cys-43. 10 LRR repeats span residues 58–79 (FTQALDISMNNITQLPEDAFKS), 82–103 (FLEELQLAGNDLSFIHPKALSG), 106–127 (ELKVLTLQNNQLRTVPSEAIHG), 130–151 (ALQSLRLDANHITSVPEDSFEG), 154–177 (QLRHLWLDDNSLTEVPVRPLSNLP), 178–199 (TLQALTLALNNISSIPDFAFTN), 202–223 (SLVVLHLHNNKIKSLSQHCFDG), 226–247 (NLETLDLNYNNLDEFPQAIKAL), 249–270 (SLKELGFHSNSISVIPDGAFGG), and 273–294 (LLRTIHLYDNPLSFVGNSAFHN). Residue Asn-68 is glycosylated (N-linked (GlcNAc...) asparagine). Residues Asn-188 and Asn-199 are each glycosylated (N-linked (GlcNAc...) asparagine). Residues Asn-294 and Asn-314 are each glycosylated (N-linked (GlcNAc...) asparagine). 5 LRR repeats span residues 320–341 (HLESLTLTGTKISSIPDDLCQN), 344–365 (MLRTLDLSYNNIRDLPSFNGCR), 366–387 (ALEEISLQRNQISLIKENTFQG), 390–411 (SLRILDLSRNLIREIHSGAFAK), and 414–435 (TITNLDVSFNELTSFPTEGLNG). Cys-339 and Cys-364 are joined by a disulfide. Cystine bridges form between Cys-470-Cys-522 and Cys-471-Cys-476. Asn-505 carries N-linked (GlcNAc...) asparagine glycosylation. Residues 545–565 (VWFIFLVALLFNLLVILTVFA) traverse the membrane as a helical segment. At 566–575 (SCSSLPASKL) the chain is on the cytoplasmic side. The helical transmembrane segment at 576–596 (FIGLISVSNLLMGIYTGILTF) threads the bilayer. Residues 597-619 (LDAVSWGRFAEFGIWWETGSGCK) are Extracellular-facing. Cysteines 618 and 693 form a disulfide. Residues 620–640 (VAGSLAVFSSESAVFLLTLAA) traverse the membrane as a helical segment. Residues 641 to 661 (VERSVFAKDLMKHGKSSHLRQ) are Cytoplasmic-facing. Residues 662–682 (FQVAALLALLGAAVAGCFPLF) form a helical membrane-spanning segment. The Extracellular portion of the chain corresponds to 683–703 (HGGQYSASPLCLPFPTGETPS). Residues 704-724 (LGFTVTLVLLNSLAFLLMAII) form a helical membrane-spanning segment. Residues 725 to 756 (YTKLYCNLEKEDLSENSQSSVIKHVAWLIFTN) lie on the Cytoplasmic side of the membrane. The helical transmembrane segment at 757–777 (CIFFCPVAFFSFAPLITAISI) threads the bilayer. Residues 778–783 (SPEIMK) lie on the Extracellular side of the membrane. The chain crosses the membrane as a helical span at residues 784–804 (SVTLIFFPLPACLNPVLYVFF). The Cytoplasmic segment spans residues 805–951 (NPKFKEDWKL…YAYNLQRVRD (147 aa)). Ser-920 bears the Phosphoserine mark.

The protein belongs to the G-protein coupled receptor 1 family.

The protein resides in the cell membrane. Functionally, receptor for R-spondins that potentiates the canonical Wnt signaling pathway and is involved in the formation of various organs. Upon binding to R-spondins (RSPO1, RSPO2, RSPO3 or RSPO4), associates with phosphorylated LRP6 and frizzled receptors that are activated by extracellular Wnt receptors, triggering the canonical Wnt signaling pathway to increase expression of target genes. In contrast to classical G-protein coupled receptors, does not activate heterotrimeric G-proteins to transduce the signal. Its function as activator of the Wnt signaling pathway is required for the development of various organs, including liver, kidney, intestine, bone, reproductive tract and eye. May also act as a receptor for norrin (NDP), such results however require additional confirmation in vivo. Required during spermatogenesis to activate the Wnt signaling pathway in peritubular myoid cells. Required for the maintenance of intestinal stem cells and Paneth cell differentiation in postnatal intestinal crypts. Acts as a regulator of bone formation and remodeling. Involved in kidney development; required for maintaining the ureteric bud in an undifferentiated state. Involved in the development of the anterior segment of the eye. Required during erythropoiesis. Also acts as a negative regulator of innate immunity by inhibiting TLR2/TLR4 associated pattern-recognition and pro-inflammatory cytokine production. Plays an important role in regulating the circadian rhythms of plasma lipids, partially through regulating the rhythmic expression of MTTP. Required for proper development of GnRH neurons (gonadotropin-releasing hormone expressing neurons) that control the release of reproductive hormones from the pituitary gland. This Rattus norvegicus (Rat) protein is Leucine-rich repeat-containing G-protein coupled receptor 4 (Lgr4).